Consider the following 455-residue polypeptide: Phosphoglucosamine mutase (455 aa).

The active-site Phosphoserine intermediate is the S104. The Mg(2+) site is built by S104, D253, D255, and D257. At S104 the chain carries Phosphoserine.

Belongs to the phosphohexose mutase family. Mg(2+) is required as a cofactor. Post-translationally, activated by phosphorylation.

It carries out the reaction alpha-D-glucosamine 1-phosphate = D-glucosamine 6-phosphate. Its function is as follows. Catalyzes the conversion of glucosamine-6-phosphate to glucosamine-1-phosphate. The sequence is that of Phosphoglucosamine mutase from Psychrobacter cryohalolentis (strain ATCC BAA-1226 / DSM 17306 / VKM B-2378 / K5).